A 385-amino-acid chain; its full sequence is Tyrosine--tRNA ligase 1, cytoplasmic (385 aa).

The 'HIGH' region motif lies at 77–85 (PSGRMHIAQ). Residues Tyr200, Gln204, Asp207, and Gln222 each contribute to the L-tyrosine site. The short motif at 259–263 (KMSKS) is the 'KMSKS' region element. Lys262 is a binding site for ATP.

It belongs to the class-I aminoacyl-tRNA synthetase family.

The protein resides in the cytoplasm. It is found in the cytosol. It carries out the reaction tRNA(Tyr) + L-tyrosine + ATP = L-tyrosyl-tRNA(Tyr) + AMP + diphosphate + H(+). Functionally, catalyzes the attachment of tyrosine to tRNA(Tyr) in a two-step reaction: tyrosine is first activated by ATP to form Tyr-AMP and then transferred to the acceptor end of tRNA(Tyr). The protein is Tyrosine--tRNA ligase 1, cytoplasmic of Arabidopsis thaliana (Mouse-ear cress).